The sequence spans 203 residues: dTTP/UTP pyrophosphatase (203 aa).

D70 (proton acceptor) is an active-site residue.

It belongs to the Maf family. YhdE subfamily. Requires a divalent metal cation as cofactor.

It is found in the cytoplasm. It carries out the reaction dTTP + H2O = dTMP + diphosphate + H(+). The enzyme catalyses UTP + H2O = UMP + diphosphate + H(+). Functionally, nucleoside triphosphate pyrophosphatase that hydrolyzes dTTP and UTP. May have a dual role in cell division arrest and in preventing the incorporation of modified nucleotides into cellular nucleic acids. This Pseudomonas putida (strain ATCC 47054 / DSM 6125 / CFBP 8728 / NCIMB 11950 / KT2440) protein is dTTP/UTP pyrophosphatase (maf-1).